The chain runs to 1285 residues: Nuclear pore complex protein NUP133 (1285 aa).

Disordered regions lie at residues Met-1 to Trp-53 and Glu-522 to Arg-580. Positions Thr-31–Ile-41 are enriched in polar residues. Composition is skewed to basic and acidic residues over residues Pro-523 to Arg-544 and Thr-553 to Asn-569.

Belongs to the nucleoporin Nup133 family. Part of the nuclear pore complex (NPC). The NPC has an eight-fold symmetrical structure comprising a central transport channel and two rings, the cytoplasmic and nuclear rings, to which eight filaments are attached. The cytoplasmic filaments have loose ends, while the nuclear filaments are joined in a distal ring, forming a nuclear basket. NPCs are highly dynamic in configuration and composition, and can be devided in 3 subcomplexes, the NUP62 subcomplex, the NUP107-160 subcomplex and the NUP93 subcomplex, containing approximately 30 different nucleoporin proteins.

Its subcellular location is the nucleus envelope. The protein localises to the nucleus. It localises to the nuclear pore complex. This chain is Nuclear pore complex protein NUP133, found in Arabidopsis thaliana (Mouse-ear cress).